Here is a 228-residue protein sequence, read N- to C-terminus: Translin (228 aa).

The interval 86 to 90 (RFHEH) is DNA/RNA binding. The tract at residues 177–198 (LDSGFRLLNLKNDSLRKRYDGL) is leucine-zipper. Lys187 carries the post-translational modification N6-acetyllysine. Residue Ser190 is modified to Phosphoserine. An N6-acetyllysine modification is found at Lys199.

This sequence belongs to the translin family. In terms of assembly, ring-shaped heterooctamer of six TSN and two TSNAX subunits, DNA/RNA binding occurs inside the ring.

The protein localises to the cytoplasm. It is found in the nucleus. DNA-binding protein that specifically recognizes consensus sequences at the breakpoint junctions in chromosomal translocations, mostly involving immunoglobulin (Ig)/T-cell receptor gene segments. Seems to recognize single-stranded DNA ends generated by staggered breaks occurring at recombination hot spots. In terms of biological role, exhibits both single-stranded and double-stranded endoribonuclease activity. May act as an activator of RNA-induced silencing complex (RISC) by facilitating endonucleolytic cleavage of the siRNA passenger strand. In Cricetulus griseus (Chinese hamster), this protein is Translin (TSN).